Reading from the N-terminus, the 266-residue chain is Orcokinin peptides type B (266 aa).

Residues 1–20 (MTAQMFTIALLLSLSAIAAA) form the signal peptide. 3 propeptides span residues 21–46 (GTIK…GAPV), 240–246 (DYDVFPD), and 264–266 (NVE).

Belongs to the orcokinin family.

The protein localises to the secreted. Its function is as follows. Myotropic peptides that enhance both the frequency and amplitude of spontaneous hindgut contractions. This is Orcokinin peptides type B from Procambarus clarkii (Red swamp crayfish).